The following is a 161-amino-acid chain: Putative pre-16S rRNA nuclease (161 aa).

Belongs to the YqgF nuclease family.

It localises to the cytoplasm. Functionally, could be a nuclease involved in processing of the 5'-end of pre-16S rRNA. The chain is Putative pre-16S rRNA nuclease from Bartonella bacilliformis (strain ATCC 35685 / KC583 / Herrer 020/F12,63).